We begin with the raw amino-acid sequence, 348 residues long: 3-isopropylmalate dehydrogenase (348 aa).

Position 76–87 (76–87) interacts with NAD(+); it reads GPKWTDPNNRPE. Residues arginine 94, arginine 104, arginine 132, and aspartate 217 each coordinate substrate. Residues aspartate 217, aspartate 241, and aspartate 245 each coordinate Mg(2+). 275-287 contacts NAD(+); it reads GSAPDIAGKNVAN.

It belongs to the isocitrate and isopropylmalate dehydrogenases family. LeuB type 1 subfamily. As to quaternary structure, homodimer. The cofactor is Mg(2+). It depends on Mn(2+) as a cofactor.

The protein resides in the cytoplasm. It catalyses the reaction (2R,3S)-3-isopropylmalate + NAD(+) = 4-methyl-2-oxopentanoate + CO2 + NADH. It functions in the pathway amino-acid biosynthesis; L-leucine biosynthesis; L-leucine from 3-methyl-2-oxobutanoate: step 3/4. Its function is as follows. Catalyzes the oxidation of 3-carboxy-2-hydroxy-4-methylpentanoate (3-isopropylmalate) to 3-carboxy-4-methyl-2-oxopentanoate. The product decarboxylates to 4-methyl-2 oxopentanoate. The chain is 3-isopropylmalate dehydrogenase from Staphylococcus aureus (strain Mu50 / ATCC 700699).